The primary structure comprises 299 residues: GTPase Era (299 aa).

The Era-type G domain maps to 9–177 (RSGSVAVIGR…VGDLLKLVPE (169 aa)). A G1 region spans residues 17 to 24 (GRPNVGKS). 17 to 24 (GRPNVGKS) is a GTP binding site. Residues 43–47 (QTTRH) are G2. Residues 64 to 67 (DTPG) are G3. Residues 64-68 (DTPGL) and 126-129 (NKVD) contribute to the GTP site. The interval 126–129 (NKVD) is G4. The interval 156 to 158 (VSA) is G5. The region spanning 200 to 284 (VREQLMRQLG…FLETWVRVRE (85 aa)) is the KH type-2 domain.

This sequence belongs to the TRAFAC class TrmE-Era-EngA-EngB-Septin-like GTPase superfamily. Era GTPase family. In terms of assembly, monomer.

The protein localises to the cytoplasm. The protein resides in the cell inner membrane. Functionally, an essential GTPase that binds both GDP and GTP, with rapid nucleotide exchange. Plays a role in 16S rRNA processing and 30S ribosomal subunit biogenesis and possibly also in cell cycle regulation and energy metabolism. In Xanthomonas axonopodis pv. citri (strain 306), this protein is GTPase Era.